Here is a 700-residue protein sequence, read N- to C-terminus: Sex comb on midleg-like protein 2 (700 aa).

The interval 1 to 33 is disordered; the sequence is MGQTVNEDSMDVKKENQEKTPQSSTSSVQRDDF. Residues 19-28 show a composition bias toward polar residues; sequence KTPQSSTSSV. MBT repeat units follow at residues 33–131 and 139–240; these read FHWE…LQPP and SSWP…LQPP. Residues 253 to 281 show a composition bias toward polar residues; sequence TESSPSEASQHSMQSPQKTTLILPTQQVR. Disordered stretches follow at residues 253 to 320 and 466 to 550; these read TESS…EKPL and PFSS…SSLN. Phosphoserine is present on residues Ser256, Ser261, Ser267, Ser299, and Ser300. Thr305 is subject to Phosphothreonine. Positions 476–495 are enriched in basic and acidic residues; that stretch reads SSAEHDKNQSAKEDVTERQS. Ser499 carries the phosphoserine modification. The residue at position 503 (Thr503) is a Phosphothreonine. Position 511 is a phosphoserine (Ser511). Lys518 participates in a covalent cross-link: Glycyl lysine isopeptide (Lys-Gly) (interchain with G-Cter in SUMO2). Ser522 carries the phosphoserine modification. Basic and acidic residues predominate over residues 535-545; the sequence is PKEENLSEDSK. A Glycyl lysine isopeptide (Lys-Gly) (interchain with G-Cter in SUMO2) cross-link involves residue Lys536. A phosphoserine mark is found at Ser570, Ser583, Ser590, and Ser594. Residues 575 to 584 show a composition bias toward polar residues; sequence RSVPGTTSSP. A disordered region spans residues 575 to 594; sequence RSVPGTTSSPLVGDISPKSS. Glycyl lysine isopeptide (Lys-Gly) (interchain with G-Cter in SUMO2) cross-links involve residues Lys599 and Lys605. An SAM domain is found at 631-700; the sequence is WSVDEVIQFM…IEKLKEGKYS (70 aa).

Belongs to the SCM family. As to expression, highly expressed in placenta, thymus and testis. Detected at lower levels in brain, liver, skeletal muscle, pancreas and ovary.

Its subcellular location is the nucleus. In terms of biological role, putative Polycomb group (PcG) protein. PcG proteins act by forming multiprotein complexes, which are required to maintain the transcriptionally repressive state of homeotic genes throughout development. This chain is Sex comb on midleg-like protein 2 (SCML2), found in Homo sapiens (Human).